Reading from the N-terminus, the 216-residue chain is Soluble inorganic pyrophosphatase 5 (216 aa).

The disordered stretch occupies residues 1–20 (MNGEEVKTSQPQKKLQNPTP). The segment covering 8 to 20 (TSQPQKKLQNPTP) has biased composition (polar residues). Substrate is bound by residues Lys-66 and Arg-80. The active-site Proton donor is Tyr-88. Residue Tyr-92 coordinates substrate. Mg(2+) is bound by residues Asp-102, Asp-107, and Asp-139. Position 176 (Tyr-176) interacts with substrate.

Belongs to the PPase family. Requires Mg(2+) as cofactor.

Its subcellular location is the cytoplasm. It catalyses the reaction diphosphate + H2O = 2 phosphate + H(+). In Arabidopsis thaliana (Mouse-ear cress), this protein is Soluble inorganic pyrophosphatase 5.